The following is a 309-amino-acid chain: Haloalkane dehalogenase (309 aa).

One can recognise an AB hydrolase-1 domain in the interval 37–148 (PTVLFLHGNP…FERWEDFHQR (112 aa)). D110 (nucleophile) is an active-site residue. Catalysis depends on E134, which acts as the Proton donor. The active-site Proton acceptor is H278.

This sequence belongs to the haloalkane dehalogenase family. Type 2 subfamily. Monomer.

It carries out the reaction 1-haloalkane + H2O = a halide anion + a primary alcohol + H(+). Catalyzes hydrolytic cleavage of carbon-halogen bonds in halogenated aliphatic compounds, leading to the formation of the corresponding primary alcohols, halide ions and protons. The protein is Haloalkane dehalogenase of Mesorhizobium japonicum (strain LMG 29417 / CECT 9101 / MAFF 303099) (Mesorhizobium loti (strain MAFF 303099)).